The following is a 1404-amino-acid chain: Clustered mitochondria protein homolog (1404 aa).

The Clu domain occupies 357–646 (HTHHADALRS…RLNPVDINWL (290 aa)). The span at 528 to 540 (ADELPEADGETTE) shows a compositional bias: acidic residues. 4 disordered regions span residues 528–561 (ADEL…SNKA), 706–735 (DAKA…ERLD), 996–1046 (GCHG…ARAT), and 1337–1372 (SERQ…GNGT). Basic and acidic residues predominate over residues 706 to 723 (DAKAKEAASKEDGEKTEA). Composition is skewed to low complexity over residues 1021–1046 (NEQQ…ARAT) and 1358–1372 (AAIT…GNGT).

It belongs to the CLU family. May associate with the eukaryotic translation initiation factor 3 (eIF-3) complex.

Its subcellular location is the cytoplasm. In terms of biological role, mRNA-binding protein involved in proper cytoplasmic distribution of mitochondria. This chain is Clustered mitochondria protein homolog, found in Mycosarcoma maydis (Corn smut fungus).